The sequence spans 577 residues: Moesin (577 aa).

Residues 2–295 form the FERM domain; it reads PKTISVRVTT…GNHELYMRRR (294 aa). Ser74 carries the phosphoserine modification. The residue at position 79 (Lys79) is an N6-acetyllysine. Lys83 is modified (N6-succinyllysine). Residues 115–120 carry the [IL]-x-C-x-x-[DE] motif motif; that stretch reads IYCPPE. Tyr116 carries the phosphotyrosine modification. Cys117 carries the post-translational modification S-nitrosocysteine. Residues Lys139 and Lys165 each carry the N6-acetyllysine modification. Disordered stretches follow at residues 323–342, 375–409, and 466–518; these read LENE…KIER, LEQE…ASRD, and AMST…NERV. Over residues 375 to 401 the composition is skewed to basic and acidic residues; that stretch reads LEQERKRAQSEAEKLAKERQEAEEAKE. Phosphoserine is present on Ser407. A compositionally biased stretch (acidic residues) spans 476 to 487; that stretch reads AENEQDEQDENG. Basic and acidic residues predominate over residues 492–518; that stretch reads ADLRADAMAKDRSEEERTTEAEKNERV. Ser527 bears the Phosphoserine mark. Position 558 is a phosphothreonine; by ROCK2 and STK10 (Thr558).

As to quaternary structure, in resting T-cells, part of a PAG1-NHERF1-MSN complex which is disrupted upon TCR activation. Interacts with NHERF1. Interacts with PPP1R16B. Interacts with SELPLG and SYK; these interactions mediate the activation of SYK by SELPLG. Interacts with PDPN (via cytoplasmic domain); this interaction activates RHOA and promotes epithelial-mesenchymal transition. Interacts with SPN/CD43 cytoplasmic tail. Interacts with CD44. Interacts with ICAM2. Interacts with ICAM3 (via C-terminus). Interacts with PDZD8. Interacts with F-actin. Interacts with CD46. Interacts with PTPN6. In terms of assembly, (Microbial infection) Interacts with HIV-1 envelope protein gp120. In terms of processing, phosphorylation on Thr-558 is crucial for the formation of microvilli-like structures. Phosphorylation by ROCK2 suppresses the head-to-tail association of the N-terminal and C-terminal halves resulting in an opened conformation which is capable of actin and membrane-binding. Phosphorylation on Thr-558 by STK10 negatively regulates lymphocyte migration and polarization. S-nitrosylation of Cys-117 is induced by interferon-gamma and oxidatively-modified low-densitity lipoprotein (LDL(ox)) implicating the iNOS-S100A8/9 transnitrosylase complex. In all tissues and cultured cells studied.

Its subcellular location is the cell membrane. It localises to the cytoplasm. It is found in the cytoskeleton. The protein resides in the apical cell membrane. The protein localises to the cell projection. Its subcellular location is the microvillus membrane. It localises to the microvillus. With respect to regulation, a head-to-tail association, of the N-terminal and C-terminal halves results in a closed conformation (inactive form) which is incapable of actin or membrane-binding. Functionally, ezrin-radixin-moesin (ERM) family protein that connects the actin cytoskeleton to the plasma membrane and thereby regulates the structure and function of specific domains of the cell cortex. Tethers actin filaments by oscillating between a resting and an activated state providing transient interactions between moesin and the actin cytoskeleton. Once phosphorylated on its C-terminal threonine, moesin is activated leading to interaction with F-actin and cytoskeletal rearrangement. These rearrangements regulate many cellular processes, including cell shape determination, membrane transport, and signal transduction. The role of moesin is particularly important in immunity acting on both T and B-cells homeostasis and self-tolerance, regulating lymphocyte egress from lymphoid organs. Modulates phagolysosomal biogenesis in macrophages. Also participates in immunologic synapse formation. This chain is Moesin, found in Homo sapiens (Human).